The following is a 434-amino-acid chain: Serine hydroxymethyltransferase (434 aa).

(6S)-5,6,7,8-tetrahydrofolate contacts are provided by residues Leu-133 and 137 to 139 (GHL). N6-(pyridoxal phosphate)lysine is present on Lys-242.

The protein belongs to the SHMT family. As to quaternary structure, homodimer. Requires pyridoxal 5'-phosphate as cofactor.

It is found in the cytoplasm. It catalyses the reaction (6R)-5,10-methylene-5,6,7,8-tetrahydrofolate + glycine + H2O = (6S)-5,6,7,8-tetrahydrofolate + L-serine. Its pathway is one-carbon metabolism; tetrahydrofolate interconversion. The protein operates within amino-acid biosynthesis; glycine biosynthesis; glycine from L-serine: step 1/1. Functionally, catalyzes the reversible interconversion of serine and glycine with tetrahydrofolate (THF) serving as the one-carbon carrier. This reaction serves as the major source of one-carbon groups required for the biosynthesis of purines, thymidylate, methionine, and other important biomolecules. Also exhibits THF-independent aldolase activity toward beta-hydroxyamino acids, producing glycine and aldehydes, via a retro-aldol mechanism. In Bradyrhizobium sp. (strain BTAi1 / ATCC BAA-1182), this protein is Serine hydroxymethyltransferase.